The chain runs to 150 residues: Ribosome maturation factor RimP (150 aa).

The protein belongs to the RimP family.

It is found in the cytoplasm. Functionally, required for maturation of 30S ribosomal subunits. The polypeptide is Ribosome maturation factor RimP (Escherichia coli O9:H4 (strain HS)).